Consider the following 155-residue polypeptide: Small ribosomal subunit protein uS10m (155 aa).

Belongs to the universal ribosomal protein uS10 family. In terms of assembly, component of the mitochondrial ribosome small subunit (28S) which comprises a 12S rRNA and about 30 distinct proteins.

The protein localises to the mitochondrion. This is Small ribosomal subunit protein uS10m (Mrps10) from Rattus norvegicus (Rat).